Reading from the N-terminus, the 152-residue chain is Endoribonuclease YbeY (152 aa).

His113, His117, and His123 together coordinate Zn(2+).

The protein belongs to the endoribonuclease YbeY family. It depends on Zn(2+) as a cofactor.

The protein localises to the cytoplasm. Functionally, single strand-specific metallo-endoribonuclease involved in late-stage 70S ribosome quality control and in maturation of the 3' terminus of the 16S rRNA. The chain is Endoribonuclease YbeY from Delftia acidovorans (strain DSM 14801 / SPH-1).